Here is a 158-residue protein sequence, read N- to C-terminus: MDITNIKEMNYEEVFSITITVDKPILIGQDDIVGRRQLIPIISGKVSGNNFNGKVLPGGIDSQIVRPDGKCELSARYAIRLDDGAAIYIENNGIRTVPDEYIEAVKSGEFVDPNAYYFRTIPTFETYSPKYKWMMNHIFVCCASRLPENVLLKFYKIS.

It belongs to the UPF0311 family.

The chain is UPF0311 protein CA_C3321 from Clostridium acetobutylicum (strain ATCC 824 / DSM 792 / JCM 1419 / IAM 19013 / LMG 5710 / NBRC 13948 / NRRL B-527 / VKM B-1787 / 2291 / W).